A 181-amino-acid chain; its full sequence is NAD(P)H-quinone oxidoreductase subunit I, chloroplastic (181 aa).

4Fe-4S ferredoxin-type domains follow at residues 55–84 (GRIHFEFDKCIACEVCVRVCPINLPVVDWE) and 95–124 (KSYSIDFGVCIFCGNCVEYCPTNCLSMTEE). Cys-64, Cys-67, Cys-70, Cys-74, Cys-104, Cys-107, Cys-110, and Cys-114 together coordinate [4Fe-4S] cluster.

It belongs to the complex I 23 kDa subunit family. In terms of assembly, NDH is composed of at least 16 different subunits, 5 of which are encoded in the nucleus. The cofactor is [4Fe-4S] cluster.

Its subcellular location is the plastid. The protein resides in the chloroplast thylakoid membrane. It catalyses the reaction a plastoquinone + NADH + (n+1) H(+)(in) = a plastoquinol + NAD(+) + n H(+)(out). It carries out the reaction a plastoquinone + NADPH + (n+1) H(+)(in) = a plastoquinol + NADP(+) + n H(+)(out). Functionally, NDH shuttles electrons from NAD(P)H:plastoquinone, via FMN and iron-sulfur (Fe-S) centers, to quinones in the photosynthetic chain and possibly in a chloroplast respiratory chain. The immediate electron acceptor for the enzyme in this species is believed to be plastoquinone. Couples the redox reaction to proton translocation, and thus conserves the redox energy in a proton gradient. The protein is NAD(P)H-quinone oxidoreductase subunit I, chloroplastic of Physcomitrium patens (Spreading-leaved earth moss).